The following is a 290-amino-acid chain: NAD kinase (290 aa).

The active-site Proton acceptor is Asp-73. Residues 73–74, 147–148, Arg-158, Arg-175, Asp-177, 188–193, and Gln-246 each bind NAD(+); these read DG, ND, and TAYALS.

This sequence belongs to the NAD kinase family. A divalent metal cation serves as cofactor.

It is found in the cytoplasm. It carries out the reaction NAD(+) + ATP = ADP + NADP(+) + H(+). Involved in the regulation of the intracellular balance of NAD and NADP, and is a key enzyme in the biosynthesis of NADP. Catalyzes specifically the phosphorylation on 2'-hydroxyl of the adenosine moiety of NAD to yield NADP. This is NAD kinase from Thiobacillus denitrificans (strain ATCC 25259 / T1).